A 950-amino-acid chain; its full sequence is MVRYNPNEIEPRWQAYWDEHHTFATPEKVGKKKRYVLDMFPYPSGDGLHVGHPEGYTATDIVSRFARARGESVLHPMGFDAFGLPAEEHAIKTGEHPRVQTQRNIDNFTRQLKMLGFSYDWDRVLATTDEEYFRWTQWIFGVLYDTWFDHDQQKGRPISELPIPAEVTAEGELEIEQYRDSKRLAYLDDALVNWCPKLGTVLANEEVVDGKSEVGGHPVKRIPLRQWMLRITDYAERLLDGLDDLDWPTGIKKLQSDWIGRSTGGEVDFYLQRGAAGDDTGPFVAFKRARESEGFPTDPGKDCLRVYTTRPDTLFGATYMVVAPEHPLIDVLVKPEQKDEVDAYREKASFKSDRERTDGDRAKTGVFTGSYAINPADGRSIPIWVADYVLAGYGTGAIMAVPAHDERDFEFAVAFDLPVIPVVDPPADHKQREEILAGKACFAAEGVAINSGEYDGKTTAEVKAALTAELAKQGLACEAVNYKLRDWLFSRQRFWGEPFPVLHEIDSEGNATGVRRLVPDDQLPVTLPELADFKPHGRPEPPLAKADDDWLIVELDGKRYRRETNTMPQWAGSCWYYLRYIDPKNSDALIDPQKEKDWMPVDLYVGGAEHAVLHLLYSRFWHKVLFDRGHVTCPEPFGKLVNQGMILGEVEFTSFVDPSGKHVSTKDVKKDAEGNRVHKATGEQVEIVSLTEEQVVKKGEGFVLASDASIKVDSRAFKMSKSRGNVVNPDSVVRDYGADSLRLYEMFMGPLEATKPWAMNGVGGVRSFLDRVWRMIIDEPEDELKVSDAVVDTACDEEQLRVLHQTIRKVTEDNEAMSFNTAIAKMMEFTNHFTRCETRPREAMESFLILLAPYAPHMCEELWKHLGHNESISLQPWPKWDEAALVQSSIEIPVQINGKVKAKISLSPDAKPNEMGEAALADPAVQNAIGDKKVVKTIAVPGRMVNLVVK.

Residues 41–52 carry the 'HIGH' region motif; sequence PYPSGDGLHVGH. Positions 718 to 722 match the 'KMSKS' region motif; it reads KMSKS. Lys721 serves as a coordination point for ATP.

It belongs to the class-I aminoacyl-tRNA synthetase family.

The protein resides in the cytoplasm. It carries out the reaction tRNA(Leu) + L-leucine + ATP = L-leucyl-tRNA(Leu) + AMP + diphosphate. The chain is Leucine--tRNA ligase from Rhodopirellula baltica (strain DSM 10527 / NCIMB 13988 / SH1).